The following is a 469-amino-acid chain: ATP synthase subunit beta (469 aa).

156-163 (GGAGVGKT) is a binding site for ATP.

The protein belongs to the ATPase alpha/beta chains family. F-type ATPases have 2 components, CF(1) - the catalytic core - and CF(0) - the membrane proton channel. CF(1) has five subunits: alpha(3), beta(3), gamma(1), delta(1), epsilon(1). CF(0) has three main subunits: a(1), b(2) and c(9-12). The alpha and beta chains form an alternating ring which encloses part of the gamma chain. CF(1) is attached to CF(0) by a central stalk formed by the gamma and epsilon chains, while a peripheral stalk is formed by the delta and b chains.

It localises to the cell membrane. The catalysed reaction is ATP + H2O + 4 H(+)(in) = ADP + phosphate + 5 H(+)(out). Its function is as follows. Produces ATP from ADP in the presence of a proton gradient across the membrane. The catalytic sites are hosted primarily by the beta subunits. In Bacillus mycoides (strain KBAB4) (Bacillus weihenstephanensis), this protein is ATP synthase subunit beta.